A 1592-amino-acid chain; its full sequence is Probable serine/threonine-protein kinase DDB_G0293958 (1592 aa).

The 302-residue stretch at 1-302 folds into the Protein kinase 1 domain; that stretch reads MTGFEIFKKK…CLNYLKEKLI (302 aa). ATP-binding positions include 2–10 and lysine 43; that span reads TGFEIFKKK. Aspartate 158 functions as the Proton acceptor in the catalytic mechanism. Disordered stretches follow at residues 348–402, 455–526, and 837–867; these read INNN…NNNN, FNDI…SNYN, and KNNNNFYNNNNNNNNNNNNNNNNNNNSNDKS. Residues 349–402 show a composition bias toward low complexity; it reads NNNNNNNNNNNNNNNNNNNNNNNNNNNNNNNNNNNNNNNNNNNNNNNNNNNNNN. Residues 461–518 adopt a coiled-coil conformation; that stretch reads STTGEEEEEEKKDNLKRQNENNQIEQEDKGEKHLKETLNNNNNNNNNNNNNNNNNNNN. Positions 486 to 496 are enriched in basic and acidic residues; the sequence is QEDKGEKHLKE. Composition is skewed to low complexity over residues 499–526 and 837–864; these read NNNNNNNNNNNNNNNNNNNNNNNNSNYN and KNNNNFYNNNNNNNNNNNNNNNNNNNSN. Positions 1342–1592 constitute a Protein kinase 2 domain; that stretch reads LGTYNLIGDS…KELIECLNKL (251 aa). ATP contacts are provided by residues 1348 to 1356 and lysine 1376; that span reads IGDSVFRNI. Aspartate 1474 (proton acceptor) is an active-site residue.

It belongs to the protein kinase superfamily. Ser/Thr protein kinase family.

It catalyses the reaction L-seryl-[protein] + ATP = O-phospho-L-seryl-[protein] + ADP + H(+). The enzyme catalyses L-threonyl-[protein] + ATP = O-phospho-L-threonyl-[protein] + ADP + H(+). This is Probable serine/threonine-protein kinase DDB_G0293958 from Dictyostelium discoideum (Social amoeba).